The primary structure comprises 385 residues: GTPase Obg (385 aa).

One can recognise an Obg domain in the interval methionine 1–leucine 159. Residues alanine 160 to asparagine 333 enclose the OBG-type G domain. GTP contacts are provided by residues glycine 166–serine 173, phenylalanine 191–valine 195, aspartate 213–glycine 216, asparagine 283–aspartate 286, and serine 314–alanine 316. 2 residues coordinate Mg(2+): serine 173 and threonine 193. A compositionally biased stretch (acidic residues) spans glutamine 362 to valine 379. The segment at glutamine 362–arginine 385 is disordered.

This sequence belongs to the TRAFAC class OBG-HflX-like GTPase superfamily. OBG GTPase family. Monomer. The cofactor is Mg(2+).

The protein resides in the cytoplasm. Its function is as follows. An essential GTPase which binds GTP, GDP and possibly (p)ppGpp with moderate affinity, with high nucleotide exchange rates and a fairly low GTP hydrolysis rate. Plays a role in control of the cell cycle, stress response, ribosome biogenesis and in those bacteria that undergo differentiation, in morphogenesis control. The protein is GTPase Obg of Sodalis glossinidius (strain morsitans).